The primary structure comprises 226 residues: Gap junction beta-2 protein (226 aa).

The Cytoplasmic segment spans residues 1 to 20 (MDWGGLHTILGGVNKHSTSI). A helical membrane pass occupies residues 21-40 (GKIWLTVLFIFRIMILVVAA). Over 41-75 (KEVWGDEQADFVCNTLQPGCKNVCYDHYFPISHIR) the chain is Extracellular. 3 cysteine pairs are disulfide-bonded: cysteine 53–cysteine 180, cysteine 60–cysteine 174, and cysteine 64–cysteine 169. A helical transmembrane segment spans residues 76 to 98 (LWALQLIFVSTPALLVAMHVAYY). The Cytoplasmic portion of the chain corresponds to 99-131 (RHEKKRKFIRGEIKTEFKDIEEIKKQKVRIEGS). Residues 132–154 (LWWTYTGSIFFRVIFEAAFMYVF) traverse the membrane as a helical segment. At 155 to 192 (YVMYDGFAMQRLVKCNAWPCPNTVDCFVSRPTEKTVFT) the chain is on the extracellular side. Residues 193-215 (VFMIAVSGICILLNVTELCYLLI) form a helical membrane-spanning segment. Over 216-226 (RFCSGKSKKPV) the chain is Cytoplasmic.

The protein belongs to the connexin family. A connexon is composed of a hexamer of connexins. Interacts with CNST.

The protein resides in the cell membrane. It localises to the cell junction. The protein localises to the gap junction. Its function is as follows. One gap junction consists of a cluster of closely packed pairs of transmembrane channels, the connexons, through which materials of low MW diffuse from one cell to a neighboring cell. In Bos taurus (Bovine), this protein is Gap junction beta-2 protein (GJB2).